Consider the following 393-residue polypeptide: Putative F-box/kelch-repeat protein At1g32430 (393 aa).

One can recognise an F-box domain in the interval 1 to 47; that stretch reads MANKEKLPWDLEEEILSRVPPTSLDRFKTVCKRWNALFNDKTFINNH. Kelch repeat units lie at residues 151–199 and 308–357; these read YMKD…NLSV and WIYV…QVQF.

The protein is Putative F-box/kelch-repeat protein At1g32430 of Arabidopsis thaliana (Mouse-ear cress).